Reading from the N-terminus, the 194-residue chain is Chitin synthase 2 (194 aa).

It belongs to the chitin synthase family. Class III subfamily.

Its subcellular location is the cell membrane. It catalyses the reaction [(1-&gt;4)-N-acetyl-beta-D-glucosaminyl](n) + UDP-N-acetyl-alpha-D-glucosamine = [(1-&gt;4)-N-acetyl-beta-D-glucosaminyl](n+1) + UDP + H(+). Functionally, polymerizes chitin, a structural polymer of the cell wall and septum, by transferring the sugar moiety of UDP-GlcNAc to the non-reducing end of the growing chitin polymer. In Ajellomyces capsulatus (Darling's disease fungus), this protein is Chitin synthase 2 (CHS2).